Reading from the N-terminus, the 927-residue chain is DNA mismatch repair protein MutS (927 aa).

646-653 (GPNMAGKS) provides a ligand contact to ATP. The disordered stretch occupies residues 904 to 927 (SAQPGSAEQGESPDKHDEGKNSRG). A compositionally biased stretch (basic and acidic residues) spans 915 to 927 (SPDKHDEGKNSRG).

It belongs to the DNA mismatch repair MutS family.

Functionally, this protein is involved in the repair of mismatches in DNA. It is possible that it carries out the mismatch recognition step. This protein has a weak ATPase activity. The polypeptide is DNA mismatch repair protein MutS (Desulfovibrio desulfuricans (strain ATCC 27774 / DSM 6949 / MB)).